The sequence spans 124 residues: Small ribosomal subunit protein uS12 (124 aa).

3-methylthioaspartic acid is present on Asp-89.

The protein belongs to the universal ribosomal protein uS12 family. In terms of assembly, part of the 30S ribosomal subunit. Contacts proteins S8 and S17. May interact with IF1 in the 30S initiation complex.

Its function is as follows. With S4 and S5 plays an important role in translational accuracy. Interacts with and stabilizes bases of the 16S rRNA that are involved in tRNA selection in the A site and with the mRNA backbone. Located at the interface of the 30S and 50S subunits, it traverses the body of the 30S subunit contacting proteins on the other side and probably holding the rRNA structure together. The combined cluster of proteins S8, S12 and S17 appears to hold together the shoulder and platform of the 30S subunit. This chain is Small ribosomal subunit protein uS12, found in Vibrio atlanticus (strain LGP32) (Vibrio splendidus (strain Mel32)).